A 64-amino-acid chain; its full sequence is DNA gyrase inhibitor YacG (64 aa).

Residues Cys9, Cys12, Cys28, and Cys32 each contribute to the Zn(2+) site. Residues 45 to 64 (KRIPSAGDLSDSDDWSEQQP) form a disordered region. Over residues 54–64 (SDSDDWSEQQP) the composition is skewed to acidic residues.

It belongs to the DNA gyrase inhibitor YacG family. In terms of assembly, interacts with GyrB. The cofactor is Zn(2+).

Functionally, inhibits all the catalytic activities of DNA gyrase by preventing its interaction with DNA. Acts by binding directly to the C-terminal domain of GyrB, which probably disrupts DNA binding by the gyrase. This Klebsiella pneumoniae subsp. pneumoniae (strain ATCC 700721 / MGH 78578) protein is DNA gyrase inhibitor YacG.